A 364-amino-acid chain; its full sequence is Glutamate 5-kinase (364 aa).

Lys-7 is an ATP binding site. Substrate-binding residues include Ser-47, Asp-134, and Asn-146. ATP contacts are provided by residues 166-167 and 209-215; these read TD and TGGIKTK. The 76-residue stretch at 274 to 349 folds into the PUA domain; it reads QGTLHVDDGA…NRIKSTQYPV (76 aa).

Belongs to the glutamate 5-kinase family.

It localises to the cytoplasm. It catalyses the reaction L-glutamate + ATP = L-glutamyl 5-phosphate + ADP. The protein operates within amino-acid biosynthesis; L-proline biosynthesis; L-glutamate 5-semialdehyde from L-glutamate: step 1/2. Functionally, catalyzes the transfer of a phosphate group to glutamate to form L-glutamate 5-phosphate. The chain is Glutamate 5-kinase from Prochlorococcus marinus (strain SARG / CCMP1375 / SS120).